Here is a 466-residue protein sequence, read N- to C-terminus: Asparagine--tRNA ligase (466 aa).

It belongs to the class-II aminoacyl-tRNA synthetase family. As to quaternary structure, homodimer.

Its subcellular location is the cytoplasm. The catalysed reaction is tRNA(Asn) + L-asparagine + ATP = L-asparaginyl-tRNA(Asn) + AMP + diphosphate + H(+). The sequence is that of Asparagine--tRNA ligase from Idiomarina loihiensis (strain ATCC BAA-735 / DSM 15497 / L2-TR).